A 275-amino-acid chain; its full sequence is MEMO1 family protein Nmar_0215 (275 aa).

Belongs to the MEMO1 family.

The protein is MEMO1 family protein Nmar_0215 of Nitrosopumilus maritimus (strain SCM1).